A 493-amino-acid chain; its full sequence is Lysine--tRNA ligase (493 aa).

2 residues coordinate Mg(2+): glutamate 402 and glutamate 409.

The protein belongs to the class-II aminoacyl-tRNA synthetase family. As to quaternary structure, homodimer. Mg(2+) is required as a cofactor.

The protein resides in the cytoplasm. The catalysed reaction is tRNA(Lys) + L-lysine + ATP = L-lysyl-tRNA(Lys) + AMP + diphosphate. This Ureaplasma urealyticum serovar 10 (strain ATCC 33699 / Western) protein is Lysine--tRNA ligase.